Consider the following 117-residue polypeptide: UPF0122 protein TTE1463 (117 aa).

The protein belongs to the UPF0122 family.

In terms of biological role, might take part in the signal recognition particle (SRP) pathway. This is inferred from the conservation of its genetic proximity to ftsY/ffh. May be a regulatory protein. The protein is UPF0122 protein TTE1463 of Caldanaerobacter subterraneus subsp. tengcongensis (strain DSM 15242 / JCM 11007 / NBRC 100824 / MB4) (Thermoanaerobacter tengcongensis).